The chain runs to 335 residues: tRNA-dihydrouridine(20/20a) synthase (335 aa).

FMN is bound by residues 19–21 (PMM) and Q72. Catalysis depends on C102, which acts as the Proton donor. FMN-binding positions include K141, H173, 213–215 (NGG), and 235–236 (GR).

Belongs to the Dus family. DusA subfamily. FMN serves as cofactor.

It catalyses the reaction 5,6-dihydrouridine(20) in tRNA + NADP(+) = uridine(20) in tRNA + NADPH + H(+). The catalysed reaction is 5,6-dihydrouridine(20) in tRNA + NAD(+) = uridine(20) in tRNA + NADH + H(+). The enzyme catalyses 5,6-dihydrouridine(20a) in tRNA + NADP(+) = uridine(20a) in tRNA + NADPH + H(+). It carries out the reaction 5,6-dihydrouridine(20a) in tRNA + NAD(+) = uridine(20a) in tRNA + NADH + H(+). Functionally, catalyzes the synthesis of 5,6-dihydrouridine (D), a modified base found in the D-loop of most tRNAs, via the reduction of the C5-C6 double bond in target uridines. Specifically modifies U20 and U20a in tRNAs. This Xanthomonas campestris pv. campestris (strain ATCC 33913 / DSM 3586 / NCPPB 528 / LMG 568 / P 25) protein is tRNA-dihydrouridine(20/20a) synthase.